Consider the following 146-residue polypeptide: D-aminoacyl-tRNA deacylase (146 aa).

The Gly-cisPro motif, important for rejection of L-amino acids motif lies at 137 to 138 (GP).

The protein belongs to the DTD family. In terms of assembly, homodimer.

The protein resides in the cytoplasm. The catalysed reaction is glycyl-tRNA(Ala) + H2O = tRNA(Ala) + glycine + H(+). The enzyme catalyses a D-aminoacyl-tRNA + H2O = a tRNA + a D-alpha-amino acid + H(+). An aminoacyl-tRNA editing enzyme that deacylates mischarged D-aminoacyl-tRNAs. Also deacylates mischarged glycyl-tRNA(Ala), protecting cells against glycine mischarging by AlaRS. Acts via tRNA-based rather than protein-based catalysis; rejects L-amino acids rather than detecting D-amino acids in the active site. By recycling D-aminoacyl-tRNA to D-amino acids and free tRNA molecules, this enzyme counteracts the toxicity associated with the formation of D-aminoacyl-tRNA entities in vivo and helps enforce protein L-homochirality. The polypeptide is D-aminoacyl-tRNA deacylase (Shouchella clausii (strain KSM-K16) (Alkalihalobacillus clausii)).